A 338-amino-acid chain; its full sequence is 5-dehydro-2-deoxygluconokinase (338 aa).

Belongs to the carbohydrate kinase PfkB family.

The catalysed reaction is 5-dehydro-2-deoxy-D-gluconate + ATP = 6-phospho-5-dehydro-2-deoxy-D-gluconate + ADP + H(+). It functions in the pathway polyol metabolism; myo-inositol degradation into acetyl-CoA; acetyl-CoA from myo-inositol: step 5/7. Catalyzes the phosphorylation of 5-dehydro-2-deoxy-D-gluconate (2-deoxy-5-keto-D-gluconate or DKG) to 6-phospho-5-dehydro-2-deoxy-D-gluconate (DKGP). The protein is 5-dehydro-2-deoxygluconokinase of Mesomycoplasma hyopneumoniae (strain 7448) (Mycoplasma hyopneumoniae).